A 437-amino-acid chain; its full sequence is Enolase-related protein 1 (437 aa).

Residues His160 and Glu169 each contribute to the substrate site. Glu212 functions as the Proton donor in the catalytic mechanism. The Mg(2+) site is built by Asp247, Glu296, and Asp321. Substrate is bound by residues Glu296 and Asp321. The active-site Proton acceptor is the Lys346. Substrate-binding positions include Ser373–Ser376 and Lys397.

This sequence belongs to the enolase family. Mg(2+) is required as a cofactor.

It catalyses the reaction (2R)-2-phosphoglycerate = phosphoenolpyruvate + H2O. The protein operates within carbohydrate degradation; glycolysis; pyruvate from D-glyceraldehyde 3-phosphate: step 4/5. The chain is Enolase-related protein 1 (ERR1) from Saccharomyces cerevisiae (strain ATCC 204508 / S288c) (Baker's yeast).